Here is a 101-residue protein sequence, read N- to C-terminus: DNA-binding protein Fis (101 aa).

A DNA-binding region (H-T-H motif) is located at residues 77–96 (QTRAANMLGINRGTLRKKLK).

This sequence belongs to the transcriptional regulatory Fis family. As to quaternary structure, homodimer.

Activates ribosomal RNA transcription. Plays a direct role in upstream activation of rRNA promoters. This is DNA-binding protein Fis from Shewanella sediminis (strain HAW-EB3).